The following is a 224-amino-acid chain: UPF0173 metal-dependent hydrolase Ta0764 (224 aa).

The protein belongs to the UPF0173 family.

This Thermoplasma acidophilum (strain ATCC 25905 / DSM 1728 / JCM 9062 / NBRC 15155 / AMRC-C165) protein is UPF0173 metal-dependent hydrolase Ta0764.